The chain runs to 556 residues: MNDDLAIAQATKLKPIDEIAEFAGIERKYLKPYGNYIAKVSHRIYEELAQREDGNLILVTAITPTSAGEGKTTTSIGLSMALNRLGKKSFVTLREPSIGPVMGIKGGAAGGGYSQVLPMEDINLHFTGDIHAVSLAHNLLSAAIDAHLKFDNELEIDSTQIYWPRAMDMNDRALRKIVVGLGGKANGYPREDKFIITAASEIMAILCLAKDLEDLKERVGNIVIAKNKKKEYVLAKDLKVHGAIAALLKDAIDPNLVQTIEGTPAFIHGGPFANIAHGTNSIIATKIALKLSDYVVTEAGFGADLGGEKFLNFVSQVAGFKPSVVVLVASLRALKLHGGAKKDSITEENLEALEKGFVNLQVHYENLRKFGVPVLTALNVFPTDTDSEKKLFEKLCEKHGIPFGESRVWAKGGKGGEALAREVIKLAETHTSEYHPLYLMDTPIEEKLDILTREIYRAKGYELSPTAKAKLRSFKKNGFGNAPVIVAKTQYSISDNPKLLGAPKDYIFNIRDLNLSAGAGFVVAVSGDIMLMPGLGKEFGAQRIDIDKSGKISGLF.

65–72 (TSAGEGKT) lines the ATP pocket.

This sequence belongs to the formate--tetrahydrofolate ligase family.

It catalyses the reaction (6S)-5,6,7,8-tetrahydrofolate + formate + ATP = (6R)-10-formyltetrahydrofolate + ADP + phosphate. The protein operates within one-carbon metabolism; tetrahydrofolate interconversion. The chain is Formate--tetrahydrofolate ligase from Kosmotoga olearia (strain ATCC BAA-1733 / DSM 21960 / TBF 19.5.1).